The following is a 477-amino-acid chain: MSTVANPNYKKGFVPFAIAALLVSLIGGFTAVLGPAFVADQGIDYNNTTWISLALAMSSAACAPILGKLGDVLGRRTTLLLGIVIFAAGNVLTAVATSLIFMLAARFIVGIGTAAISPIVMAYIVTEYPQEETGKAFGLYMLISSGAVVVGPTCGGLIMNAAGWRVMMWVCVALCVVVFLICTFSIKKTAFEKKSMAGFDKPGAALVVVFFSLFLCIPSFGQNIGWSSTAFIAAAAVALVALFILVMVEKKAKSPIMNGKFMARKEFVLPVLILFLTQGLMMANMTNVIVFVRYTQPDNVIISSFAISIMYIGMSLGSVIIGPVADKKEPKTVLTFSLVLTAIGCALMYLFKADSSVAIFAASLGILGFGLGGNATIFMKVALSGLSSEVAGSGTGTYGLFRDISAPFGVAVFVPMFANGVTANIAKYASGGMEEGAATVKAAISSIQTLTLVELGCIVVGIILVRMLPRIYQKKEA.

The next 15 helical transmembrane spans lie at F13–L33, W50–G70, I83–L103, F107–E127, L139–M159, V166–I186, L206–W226, S228–V248, L272–V292, I301–I321, V333–A353, I359–M379, V381–F401, A406–A426, and I444–L464.

This sequence belongs to the major facilitator superfamily.

It is found in the cell membrane. It participates in lipid metabolism; bile acid degradation. The sequence is that of Bile acid transporter (baiG) from Clostridium scindens (strain JCM 10418 / VPI 12708).